The chain runs to 148 residues: Glutamate mutase sigma subunit (148 aa).

Positions N3–S140 constitute a B12-binding domain. Adenosylcob(III)alamin-binding positions include A13 to A17, H16, S61 to I63, and N93 to G97.

It belongs to the methylaspartate mutase GlmS subunit family. As to quaternary structure, heterotetramer composed of 2 epsilon subunits (GlmE) and 2 sigma subunits (GlmS). GlmE exists as a homodimer and GlmS as a monomer. Requires adenosylcob(III)alamin as cofactor.

It catalyses the reaction (2S,3S)-3-methyl-L-aspartate = L-glutamate. The protein operates within amino-acid degradation; L-glutamate degradation via mesaconate pathway; acetate and pyruvate from L-glutamate: step 1/4. In terms of biological role, catalyzes the carbon skeleton rearrangement of L-glutamate to L-threo-3-methylaspartate ((2S,3S)-3-methylaspartate). This is Glutamate mutase sigma subunit from Yersinia enterocolitica serotype O:8 / biotype 1B (strain NCTC 13174 / 8081).